The following is an 813-amino-acid chain: UPF0508 protein KLLA0A06237g (813 aa).

The segment at 478–537 (KKDKSKSQKNSTDSLAKLSDTKSIHPPESAMSSHASTPSSTSKSSKSSKSSSTLSPSTCK) is disordered. Over residues 506–537 (SAMSSHASTPSSTSKSSKSSKSSSTLSPSTCK) the composition is skewed to low complexity.

Belongs to the UPF0508 family.

This is UPF0508 protein KLLA0A06237g from Kluyveromyces lactis (strain ATCC 8585 / CBS 2359 / DSM 70799 / NBRC 1267 / NRRL Y-1140 / WM37) (Yeast).